A 322-amino-acid polypeptide reads, in one-letter code: Serine protease Lpg1137 (322 aa).

Serine 68 is a catalytic residue.

The protein localises to the secreted. It localises to the host mitochondrion membrane. Functionally, serine protease effector that inhibits host cell autophagy by targeting SNX17. Localizes to the host endoplasmic reticulum-mitochondria contact site and catalyzes degradation of host SNX17, thereby impairing endoplasmic reticulum-mitochondria communication, leading to inhibit autophagy as well as staurosporine-induced apoptosis. In Legionella pneumophila subsp. pneumophila (strain Philadelphia 1 / ATCC 33152 / DSM 7513), this protein is Serine protease Lpg1137.